Here is a 518-residue protein sequence, read N- to C-terminus: Crotonobetaine/carnitine--CoA ligase (518 aa).

The protein belongs to the ATP-dependent AMP-binding enzyme family.

It carries out the reaction 4-(trimethylamino)butanoate + ATP + CoA = 4-(trimethylamino)butanoyl-CoA + AMP + diphosphate. The enzyme catalyses crotonobetaine + ATP + CoA = crotonobetainyl-CoA + AMP + diphosphate. The catalysed reaction is (R)-carnitine + ATP + CoA = (R)-carnitinyl-CoA + AMP + diphosphate. It participates in amine and polyamine metabolism; carnitine metabolism. Functionally, catalyzes the transfer of CoA to carnitine, generating the initial carnitinyl-CoA needed for the CaiB reaction cycle. Also has activity toward crotonobetaine and gamma-butyrobetaine. In Proteus sp. (strain LE138), this protein is Crotonobetaine/carnitine--CoA ligase.